The following is a 574-amino-acid chain: Adenine deaminase (574 aa).

Belongs to the metallo-dependent hydrolases superfamily. Adenine deaminase family. Mn(2+) is required as a cofactor.

The enzyme catalyses adenine + H2O + H(+) = hypoxanthine + NH4(+). The protein is Adenine deaminase of Thermosipho melanesiensis (strain DSM 12029 / CIP 104789 / BI429).